A 522-amino-acid chain; its full sequence is Protein nucleotidyltransferase YdiU (522 aa).

ATP contacts are provided by G109, G111, R112, K132, D144, G145, R195, and R202. D271 serves as the catalytic Proton acceptor. The Mg(2+) site is built by N272 and D281. An ATP-binding site is contributed by D281.

It belongs to the SELO family. Requires Mg(2+) as cofactor. It depends on Mn(2+) as a cofactor.

The catalysed reaction is L-seryl-[protein] + ATP = 3-O-(5'-adenylyl)-L-seryl-[protein] + diphosphate. It carries out the reaction L-threonyl-[protein] + ATP = 3-O-(5'-adenylyl)-L-threonyl-[protein] + diphosphate. The enzyme catalyses L-tyrosyl-[protein] + ATP = O-(5'-adenylyl)-L-tyrosyl-[protein] + diphosphate. It catalyses the reaction L-histidyl-[protein] + UTP = N(tele)-(5'-uridylyl)-L-histidyl-[protein] + diphosphate. The catalysed reaction is L-seryl-[protein] + UTP = O-(5'-uridylyl)-L-seryl-[protein] + diphosphate. It carries out the reaction L-tyrosyl-[protein] + UTP = O-(5'-uridylyl)-L-tyrosyl-[protein] + diphosphate. Its function is as follows. Nucleotidyltransferase involved in the post-translational modification of proteins. It can catalyze the addition of adenosine monophosphate (AMP) or uridine monophosphate (UMP) to a protein, resulting in modifications known as AMPylation and UMPylation. The protein is Protein nucleotidyltransferase YdiU of Burkholderia cenocepacia (strain HI2424).